Here is a 396-residue protein sequence, read N- to C-terminus: S-arrestin (396 aa).

The protein belongs to the arrestin family.

Its function is as follows. Arrestin is one of the major proteins of the ros (retinal rod outer segments); it binds to photoactivated-phosphorylated rhodopsin, thereby apparently preventing the transducin-mediated activation of phosphodiesterase. This is S-arrestin from Lithobates pipiens (Northern leopard frog).